The sequence spans 291 residues: Small ribosomal subunit biogenesis GTPase RsgA (291 aa).

Residues 63 to 221 (KNELKRPPVS…IADTPGFSAL (159 aa)) enclose the CP-type G domain. GTP-binding positions include 112-115 (TKKD) and 164-172 (GQSGVGKST). Residues cysteine 245, cysteine 250, histidine 252, and cysteine 258 each contribute to the Zn(2+) site.

Belongs to the TRAFAC class YlqF/YawG GTPase family. RsgA subfamily. In terms of assembly, monomer. Associates with 30S ribosomal subunit, binds 16S rRNA. Zn(2+) is required as a cofactor.

The protein resides in the cytoplasm. In terms of biological role, one of several proteins that assist in the late maturation steps of the functional core of the 30S ribosomal subunit. Helps release RbfA from mature subunits. May play a role in the assembly of ribosomal proteins into the subunit. Circularly permuted GTPase that catalyzes slow GTP hydrolysis, GTPase activity is stimulated by the 30S ribosomal subunit. This is Small ribosomal subunit biogenesis GTPase RsgA from Staphylococcus aureus (strain Mu50 / ATCC 700699).